A 251-amino-acid polypeptide reads, in one-letter code: 3-deoxy-manno-octulosonate cytidylyltransferase (251 aa).

Belongs to the KdsB family.

The protein localises to the cytoplasm. The enzyme catalyses 3-deoxy-alpha-D-manno-oct-2-ulosonate + CTP = CMP-3-deoxy-beta-D-manno-octulosonate + diphosphate. It participates in nucleotide-sugar biosynthesis; CMP-3-deoxy-D-manno-octulosonate biosynthesis; CMP-3-deoxy-D-manno-octulosonate from 3-deoxy-D-manno-octulosonate and CTP: step 1/1. The protein operates within bacterial outer membrane biogenesis; lipopolysaccharide biosynthesis. Activates KDO (a required 8-carbon sugar) for incorporation into bacterial lipopolysaccharide in Gram-negative bacteria. This chain is 3-deoxy-manno-octulosonate cytidylyltransferase, found in Sodalis glossinidius (strain morsitans).